The following is a 260-amino-acid chain: MTDILNKILATKAQEVAAQKAAVNAEHIRALAAEAAPVRSFIDSIRGKHRLNLPAVIAEIKKASPSKGLIRPDFRPAEIARAYENAGAACLSVLTDEPYFQGSPEYLKQAREAVLLPVLRKDFIIDEYQVYQARAWGADAVLLIAAALEQGQLERFEALAHELGMTVLLELHDETELEKCRNLTTPLRGVNNRNLRTFEVSLDQTLSLLPALEGKTVVTESGITGKADVEFMRARGVHTFLIGETFMRADDIGAEVGKLF.

Belongs to the TrpC family.

The enzyme catalyses 1-(2-carboxyphenylamino)-1-deoxy-D-ribulose 5-phosphate + H(+) = (1S,2R)-1-C-(indol-3-yl)glycerol 3-phosphate + CO2 + H2O. It participates in amino-acid biosynthesis; L-tryptophan biosynthesis; L-tryptophan from chorismate: step 4/5. This Neisseria gonorrhoeae (strain NCCP11945) protein is Indole-3-glycerol phosphate synthase.